The chain runs to 449 residues: MGKYFGTDGVRGVANRELTPELAFQIGRCGGYVLTKSAERPKVLIGRDTRISGHMLEGALVAGLLSIGAEVMRLGVISTPGVAYLTKALGAQAGIMISASHNPVQDNGIKFFGPDGFKLSDEQEAEIEALIDSAEDMLPRPIGAGLGQVNDYFEGGQKYLQYLKQTIDEEDFSGMKIALDCAHGATSSLATYLFADLDADVVTMGASPNGLNINEGVGSTHPEALAAFVKEKGADVGLAFDGDGDRLIAVDERGNIVDGDQIMYICAKYLKETGRLKQQTVVSTVMSNLGFYKALEAQGIKSVQTAVGDRYVVEEMKKNGYNLGGEQSGHIIFLDYNTTGDGMLTALQLVNIMKIKGKPLSELAGEMKKYPQLLVNVRVADKEKAMENEQVKKVIQEVEAEMNGNGRVLVRPSGTEPLVRIMAEAQTEEACRAYVERIADVVRREMGVE.

The Phosphoserine intermediate role is filled by serine 100. The Mg(2+) site is built by serine 100, aspartate 241, aspartate 243, and aspartate 245. Phosphoserine is present on serine 100.

Belongs to the phosphohexose mutase family. Mg(2+) serves as cofactor. In terms of processing, activated by phosphorylation.

It catalyses the reaction alpha-D-glucosamine 1-phosphate = D-glucosamine 6-phosphate. Functionally, catalyzes the conversion of glucosamine-6-phosphate to glucosamine-1-phosphate. The polypeptide is Phosphoglucosamine mutase (Geobacillus kaustophilus (strain HTA426)).